Consider the following 101-residue polypeptide: Urease subunit beta (101 aa).

It belongs to the urease beta subunit family. Heterotrimer of UreA (gamma), UreB (beta) and UreC (alpha) subunits. Three heterotrimers associate to form the active enzyme.

Its subcellular location is the cytoplasm. The enzyme catalyses urea + 2 H2O + H(+) = hydrogencarbonate + 2 NH4(+). Its pathway is nitrogen metabolism; urea degradation; CO(2) and NH(3) from urea (urease route): step 1/1. The sequence is that of Urease subunit beta from Rhizobium etli (strain ATCC 51251 / DSM 11541 / JCM 21823 / NBRC 15573 / CFN 42).